We begin with the raw amino-acid sequence, 75 residues long: Lipid-anchored plasma membrane protein CPP2 (75 aa).

The segment at Met-1–Val-43 is disordered. Tandem repeats lie at residues Gln-4–Pro-13, Gln-14–Pro-23, and Gln-24–Pro-33. Positions Gln-4 to Pro-33 are 3 X 10 AA tandem repeats of Q-Q-G-Y-Y-Q-Q-G-P-P.

The protein belongs to the CYSTM1 family. Palmitoylated near the C-terminus.

The protein localises to the cell membrane. This Saccharomyces cerevisiae (strain ATCC 204508 / S288c) (Baker's yeast) protein is Lipid-anchored plasma membrane protein CPP2.